The sequence spans 71 residues: Translation initiation factor IF-1 (71 aa).

Residues 1–71 form the S1-like domain; it reads MAKQSAIEQD…LSKARITYRY (71 aa).

The protein belongs to the IF-1 family. Component of the 30S ribosomal translation pre-initiation complex which assembles on the 30S ribosome in the order IF-2 and IF-3, IF-1 and N-formylmethionyl-tRNA(fMet); mRNA recruitment can occur at any time during PIC assembly.

It localises to the cytoplasm. Its function is as follows. One of the essential components for the initiation of protein synthesis. Stabilizes the binding of IF-2 and IF-3 on the 30S subunit to which N-formylmethionyl-tRNA(fMet) subsequently binds. Helps modulate mRNA selection, yielding the 30S pre-initiation complex (PIC). Upon addition of the 50S ribosomal subunit IF-1, IF-2 and IF-3 are released leaving the mature 70S translation initiation complex. In Flavobacterium psychrophilum (strain ATCC 49511 / DSM 21280 / CIP 103535 / JIP02/86), this protein is Translation initiation factor IF-1.